We begin with the raw amino-acid sequence, 273 residues long: Aliphatic sulfonates import ATP-binding protein SsuB 2 (273 aa).

In terms of domain architecture, ABC transporter spans 17 to 241; it reads LLDLRITRKL…PRDRRDPTLA (225 aa). ATP is bound at residue 50–57; that stretch reads GPSGCGKS.

The protein belongs to the ABC transporter superfamily. Aliphatic sulfonates importer (TC 3.A.1.17.2) family. The complex is composed of two ATP-binding proteins (SsuB), two transmembrane proteins (SsuC) and a solute-binding protein (SsuA).

It is found in the cell inner membrane. The enzyme catalyses ATP + H2O + aliphatic sulfonate-[sulfonate-binding protein]Side 1 = ADP + phosphate + aliphatic sulfonateSide 2 + [sulfonate-binding protein]Side 1.. Part of the ABC transporter complex SsuABC involved in aliphatic sulfonates import. Responsible for energy coupling to the transport system. In Burkholderia lata (strain ATCC 17760 / DSM 23089 / LMG 22485 / NCIMB 9086 / R18194 / 383), this protein is Aliphatic sulfonates import ATP-binding protein SsuB 2.